The primary structure comprises 160 residues: ATP synthase subunit b (160 aa).

A helical membrane pass occupies residues Ile-12 to Ile-32.

This sequence belongs to the ATPase B chain family. F-type ATPases have 2 components, F(1) - the catalytic core - and F(0) - the membrane proton channel. F(1) has five subunits: alpha(3), beta(3), gamma(1), delta(1), epsilon(1). F(0) has three main subunits: a(1), b(2) and c(10-14). The alpha and beta chains form an alternating ring which encloses part of the gamma chain. F(1) is attached to F(0) by a central stalk formed by the gamma and epsilon chains, while a peripheral stalk is formed by the delta and b chains.

Its subcellular location is the cell inner membrane. In terms of biological role, f(1)F(0) ATP synthase produces ATP from ADP in the presence of a proton or sodium gradient. F-type ATPases consist of two structural domains, F(1) containing the extramembraneous catalytic core and F(0) containing the membrane proton channel, linked together by a central stalk and a peripheral stalk. During catalysis, ATP synthesis in the catalytic domain of F(1) is coupled via a rotary mechanism of the central stalk subunits to proton translocation. Its function is as follows. Component of the F(0) channel, it forms part of the peripheral stalk, linking F(1) to F(0). The chain is ATP synthase subunit b from Blochmanniella pennsylvanica (strain BPEN).